The sequence spans 822 residues: Lysine-specific histone demethylase 2 (822 aa).

Over residues 1-11 the composition is skewed to basic residues; that stretch reads MATPRGRTKKK. Residues 1-47 form a disordered region; sequence MATPRGRTKKKASFDHSPDSLPLRSSGRQAKKKATETTDEDEDGGSE. A phosphoserine mark is found at S13, S17, and S26. C53, C58, C65, C73, H84, H90, C92, C95, C142, C147, C169, and C185 together coordinate Zn(2+). The CW-type zinc finger occupies 133–193; sequence DQQLPYWVQC…HCSLPEDLRV (61 aa). A Phosphoserine modification is found at S247. Residues 273–292 are GLYR1-binding; it reads YQPNECGKALCVRPDVMELD. Positions 275–373 constitute an SWIRM domain; that stretch reads PNECGKALCV…TGVLSVGADQ (99 aa). 383–439 provides a ligand contact to FAD; it reads KSVIIIGAGPAGLAAARQLHNFGIKVTVLEAKDRIGGRVWDDKSFKGVTVGRGAQIV. Histone H3-binding regions lie at residues 438–467, 487–498, and 538–572; these read IVNG…RCDL, FNALLDVVSEWR, and FHLS…AGDH. Residues 564–566 form a GLYR1-binding region; sequence FFA. FAD contacts are provided by residues V598, E795, and 803–805; that span reads QTV. The GLYR1-binding stretch occupies residues 798 to 814; it reads NRHFPQTVTGAYLSGVR.

This sequence belongs to the flavin monoamine oxidase family. Interacts with its cofactor GLYR1 at nucleosomes; this interaction stimulates H3K4me1 and H3K4me2 demethylation. In contrast to KDM1A, does not form a complex with RCOR1/CoREST. Possible accessory component of the polycomb repressive deubiquitinase (PR-DUB) complex, at least composed of BAP1, one of ASXL1, ASXL2 or (probably) ASXL3 and one of MBD5 or MBD6. The PR-DUB core associates with a number of accessory proteins, including FOXK1, FOXK2, KDM1B, HCFC1 and OGT; KDM1B specifically associates with ASXL2 PR-DUB complexes. FAD is required as a cofactor. Requires Zn(2+) as cofactor.

It localises to the nucleus. Its subcellular location is the chromosome. It catalyses the reaction N(6),N(6)-dimethyl-L-lysyl(4)-[histone H3] + 2 A + 2 H2O = L-lysyl(4)-[histone H3] + 2 formaldehyde + 2 AH2. The enzyme catalyses N(6)-methyl-L-lysyl(4)-[histone H3] + A + H2O = L-lysyl(4)-[histone H3] + formaldehyde + AH2. With respect to regulation, histone H3K4me1 and H3K4me2 demethylase activity is inhibited by DNA, this inhibition is released in complex with GLYR1. Functionally, histone demethylase that demethylates 'Lys-4' of histone H3, a specific tag for epigenetic transcriptional activation, thereby acting as a corepressor. Required for de novo DNA methylation of a subset of imprinted genes during oogenesis. Acts by oxidizing the substrate by FAD to generate the corresponding imine that is subsequently hydrolyzed. Demethylates both mono- and di-methylated 'Lys-4' of histone H3. Has no effect on tri-methylated 'Lys-4', mono-, di- or tri-methylated 'Lys-9', mono-, di- or tri-methylated 'Lys-27', mono-, di- or tri-methylated 'Lys-36' of histone H3, or on mono-, di- or tri-methylated 'Lys-20' of histone H4. Alone, it is unable to demethylate H3K4me on nucleosomes and requires the presence of GLYR1 to achieve such activity, they form a multifunctional enzyme complex that modifies transcribed chromatin and facilitates Pol II transcription through nucleosomes. The chain is Lysine-specific histone demethylase 2 from Homo sapiens (Human).